We begin with the raw amino-acid sequence, 61 residues long: DNA-directed RNA polymerase subunit Rpo6 (61 aa).

It belongs to the archaeal Rpo6/eukaryotic RPB6 RNA polymerase subunit family. Part of the RNA polymerase complex.

Its subcellular location is the cytoplasm. The enzyme catalyses RNA(n) + a ribonucleoside 5'-triphosphate = RNA(n+1) + diphosphate. In terms of biological role, DNA-dependent RNA polymerase (RNAP) catalyzes the transcription of DNA into RNA using the four ribonucleoside triphosphates as substrates. In Methanothermobacter thermautotrophicus (strain ATCC 29096 / DSM 1053 / JCM 10044 / NBRC 100330 / Delta H) (Methanobacterium thermoautotrophicum), this protein is DNA-directed RNA polymerase subunit Rpo6.